The following is a 372-amino-acid chain: Signal peptide peptidase-like 1 (372 aa).

Topologically, residues 1–6 are lumenal; that stretch reads METLWT. A helical transmembrane segment spans residues 7-27; the sequence is LLYLLEPAPATLIVTAVTVTF. Residues 28 to 54 lie on the Cytoplasmic side of the membrane; sequence ASAFRALNYGKEMERNRDFSEASITLD. A helical membrane pass occupies residues 55–77; it reads SSQALMIPVMSSCSLLLMFYLFS. At 78–81 the chain is on the lumenal side; sequence SVSQ. Residues 82-104 form a helical membrane-spanning segment; that stretch reads LLTAFTAIASVSSLFYWLSPYAV. The Cytoplasmic segment spans residues 105–123; that stretch reads YMKTQLGLSDPFLSRCCSK. A helical membrane pass occupies residues 124–146; sequence SFTRIQGLLLVACAMTVVAWLIS. Topologically, residues 147-149 are lumenal; sequence GHW. A helical transmembrane segment spans residues 150 to 167; it reads VLNNLLGISICIAFVSHV. Residues 168-171 lie on the Cytoplasmic side of the membrane; sequence RLPN. Residues 172 to 192 traverse the membrane as a helical segment; that stretch reads IKICAMLLVCLFVYDIFWVFF. D186 is a catalytic residue. At 193–257 the chain is on the lumenal side; sequence SERFFGANVM…GVVPGVSASD (65 aa). Residues 258 to 278 traverse the membrane as a helical segment; sequence FMMLGLGDMAIPAMLLALVLC. D265 is an active-site residue. The Cytoplasmic portion of the chain corresponds to 279–301; that stretch reads FDHRKTRDVVNIFDLKSSKGHKY. The chain crosses the membrane as a helical span at residues 302–322; sequence IWYALPGYAIGLVAALAAGVL. The Lumenal portion of the chain corresponds to 323-325; that stretch reads THS. Residues 326 to 346 traverse the membrane as a helical segment; the sequence is PQPALLYLVPSTLGPVIFMSW. The short motif at 328–330 is the PAL element; that stretch reads PAL. Over 347-372 the chain is Cytoplasmic; it reads RRKDLAELWEGPALSNPIEKSHEIEI.

It belongs to the peptidase A22B family. Ubiquitous.

It localises to the endosome membrane. In terms of biological role, intramembrane-cleaving aspartic protease (I-CLiP) that cleaves type II membrane signal peptides in the hydrophobic plane of the membrane. The chain is Signal peptide peptidase-like 1 (SPPL1) from Arabidopsis thaliana (Mouse-ear cress).